The sequence spans 142 residues: MLMGEFTHTIDSKGRLIIPAKFREQLGAHFIVTRGLDGCLFGYPLNEWAILEQKLKALPLTKRDARAFVRFLYSAATDCEIDKQGRINIPITLRTHASLEKKCVIVGVSNRLEIWSAERWNKFTSETADNFDEIAEDLNIDF.

2 SpoVT-AbrB domains span residues 5-47 (EFTH…PLNE) and 76-119 (ATDC…SAER).

This sequence belongs to the MraZ family. As to quaternary structure, forms oligomers.

It is found in the cytoplasm. The protein localises to the nucleoid. The chain is Transcriptional regulator MraZ from Limosilactobacillus reuteri (strain DSM 20016) (Lactobacillus reuteri).